The sequence spans 421 residues: Ribulose bisphosphate carboxylase large chain (421 aa).

2 residues coordinate substrate: Asn68 and Thr118. The active-site Proton acceptor is Lys120. Position 122 (Lys122) interacts with substrate. Mg(2+) contacts are provided by Lys146, Asp148, and Glu149. An N6-carboxylysine modification is found at Lys146. The Proton acceptor role is filled by His239. Residues Arg240, His272, and Ser324 each coordinate substrate.

The protein belongs to the RuBisCO large chain family. Type I subfamily. Heterohexadecamer of 8 large chains and 8 small chains; disulfide-linked. The disulfide link is formed within the large subunit homodimers. Requires Mg(2+) as cofactor. In terms of processing, the disulfide bond which can form in the large chain dimeric partners within the hexadecamer appears to be associated with oxidative stress and protein turnover.

It is found in the plastid. The protein resides in the chloroplast. It carries out the reaction 2 (2R)-3-phosphoglycerate + 2 H(+) = D-ribulose 1,5-bisphosphate + CO2 + H2O. The enzyme catalyses D-ribulose 1,5-bisphosphate + O2 = 2-phosphoglycolate + (2R)-3-phosphoglycerate + 2 H(+). Functionally, ruBisCO catalyzes two reactions: the carboxylation of D-ribulose 1,5-bisphosphate, the primary event in carbon dioxide fixation, as well as the oxidative fragmentation of the pentose substrate in the photorespiration process. Both reactions occur simultaneously and in competition at the same active site. The sequence is that of Ribulose bisphosphate carboxylase large chain (rbcL) from Aegilops crassa (Persian goatgrass).